Reading from the N-terminus, the 1377-residue chain is DNA-directed RNA polymerase subunit beta (1377 aa).

It belongs to the RNA polymerase beta chain family. As to quaternary structure, the RNAP catalytic core consists of 2 alpha, 1 beta, 1 beta' and 1 omega subunit. When a sigma factor is associated with the core the holoenzyme is formed, which can initiate transcription.

The catalysed reaction is RNA(n) + a ribonucleoside 5'-triphosphate = RNA(n+1) + diphosphate. Functionally, DNA-dependent RNA polymerase catalyzes the transcription of DNA into RNA using the four ribonucleoside triphosphates as substrates. This is DNA-directed RNA polymerase subunit beta from Orientia tsutsugamushi (strain Boryong) (Rickettsia tsutsugamushi).